A 197-amino-acid polypeptide reads, in one-letter code: RNA pyrophosphohydrolase (197 aa).

One can recognise a Nudix hydrolase domain in the interval 6–154 (GYRPNVGIVL…KREVYQLALS (149 aa)). Positions 38 to 59 (GGIQHGESPEQAMYRELHEEVG) match the Nudix box motif.

This sequence belongs to the Nudix hydrolase family. RppH subfamily. A divalent metal cation serves as cofactor.

Its function is as follows. Accelerates the degradation of transcripts by removing pyrophosphate from the 5'-end of triphosphorylated RNA, leading to a more labile monophosphorylated state that can stimulate subsequent ribonuclease cleavage. This Polynucleobacter necessarius subsp. necessarius (strain STIR1) protein is RNA pyrophosphohydrolase.